Consider the following 136-residue polypeptide: Large-conductance mechanosensitive channel (136 aa).

2 helical membrane passes run 9–29 (AFASRGNVIDMAVGIIIGAAF) and 79–99 (IQTVIDFTIIAFAIFMGLKAI).

The protein belongs to the MscL family. Homopentamer.

Its subcellular location is the cell inner membrane. In terms of biological role, channel that opens in response to stretch forces in the membrane lipid bilayer. May participate in the regulation of osmotic pressure changes within the cell. The polypeptide is Large-conductance mechanosensitive channel (Shewanella putrefaciens (strain CN-32 / ATCC BAA-453)).